The chain runs to 494 residues: Glutamyl-tRNA(Gln) amidotransferase subunit A (494 aa).

Catalysis depends on charge relay system residues Lys79 and Ser159. The active-site Acyl-ester intermediate is Ser183.

The protein belongs to the amidase family. GatA subfamily. Heterotrimer of A, B and C subunits.

The enzyme catalyses L-glutamyl-tRNA(Gln) + L-glutamine + ATP + H2O = L-glutaminyl-tRNA(Gln) + L-glutamate + ADP + phosphate + H(+). Functionally, allows the formation of correctly charged Gln-tRNA(Gln) through the transamidation of misacylated Glu-tRNA(Gln) in organisms which lack glutaminyl-tRNA synthetase. The reaction takes place in the presence of glutamine and ATP through an activated gamma-phospho-Glu-tRNA(Gln). The chain is Glutamyl-tRNA(Gln) amidotransferase subunit A from Bartonella henselae (strain ATCC 49882 / DSM 28221 / CCUG 30454 / Houston 1) (Rochalimaea henselae).